The chain runs to 202 residues: MSRYRGPRVRIIRRLGTLPGLTNKTSQLKSSSINQSISNKKISQYRIRLEEKQKLRFHYGITERQLLNYVRIARKAKGSTGEVLLQLLEMRSDNVIFRLGMAPTIPGARQLVNHRHILVNDCIVDIPSYRCKPQDFITIKNQRKSETMISKNIELYQKSKIPNHLTYSSLEKKGLVNQILDRESIGLKINELLVVEYYSRQA.

Residues 90–158 form the S4 RNA-binding domain; that stretch reads MRSDNVIFRL…ISKNIELYQK (69 aa).

The protein belongs to the universal ribosomal protein uS4 family. Part of the 30S ribosomal subunit. Contacts protein S5. The interaction surface between S4 and S5 is involved in control of translational fidelity.

The protein localises to the plastid. It is found in the chloroplast. Functionally, one of the primary rRNA binding proteins, it binds directly to 16S rRNA where it nucleates assembly of the body of the 30S subunit. With S5 and S12 plays an important role in translational accuracy. The protein is Small ribosomal subunit protein uS4c (rps4) of Exsertotheca crispa (Moss).